A 500-amino-acid chain; its full sequence is Adenylosuccinate synthetase, chloroplastic (500 aa).

GTP-binding positions include 87–93 (GDEGKGK) and 115–117 (GHT). The active-site Proton acceptor is Asp-88. Mg(2+)-binding residues include Asp-88 and Gly-115. Residues 88–91 (DEGK), 113–116 (NAGH), Thr-205, Arg-219, Gln-299, Thr-314, and Arg-378 contribute to the IMP site. His-116 serves as the catalytic Proton donor. Residue 374–380 (TTTGRPR) participates in substrate binding. Residues Arg-380, 406–408 (KLD), and 489–491 (GIG) contribute to the GTP site.

Belongs to the adenylosuccinate synthetase family. Homodimer. Mg(2+) is required as a cofactor.

The protein localises to the plastid. It localises to the chloroplast. The catalysed reaction is IMP + L-aspartate + GTP = N(6)-(1,2-dicarboxyethyl)-AMP + GDP + phosphate + 2 H(+). The protein operates within purine metabolism; AMP biosynthesis via de novo pathway; AMP from IMP: step 1/2. Plays an important role in the de novo pathway and in the salvage pathway of purine nucleotide biosynthesis. Catalyzes the first committed step in the biosynthesis of AMP from IMP. The protein is Adenylosuccinate synthetase, chloroplastic of Solanum bulbocastanum (Wild potato).